Here is a 148-residue protein sequence, read N- to C-terminus: UPF0260 protein PM0539 (148 aa).

This sequence belongs to the UPF0260 family.

This is UPF0260 protein PM0539 from Pasteurella multocida (strain Pm70).